Consider the following 58-residue polypeptide: Succinate dehydrogenase subunit 8B, mitochondrial (58 aa).

Component of complex II composed of eight subunits in plants: four classical SDH subunits SDH1, SDH2, SDH3 and SDH4 (a flavoprotein (FP), an iron-sulfur protein (IP), and a cytochrome b composed of a large and a small subunit.), as well as four subunits unknown in mitochondria from bacteria and heterotrophic eukaryotes.

The protein resides in the mitochondrion inner membrane. Its pathway is carbohydrate metabolism; tricarboxylic acid cycle. This chain is Succinate dehydrogenase subunit 8B, mitochondrial, found in Oryza sativa subsp. japonica (Rice).